A 134-amino-acid chain; its full sequence is ATP synthase epsilon chain (134 aa).

The protein belongs to the ATPase epsilon chain family. In terms of assembly, F-type ATPases have 2 components, CF(1) - the catalytic core - and CF(0) - the membrane proton channel. CF(1) has five subunits: alpha(3), beta(3), gamma(1), delta(1), epsilon(1). CF(0) has three main subunits: a, b and c.

The protein localises to the cellular thylakoid membrane. Produces ATP from ADP in the presence of a proton gradient across the membrane. In Prochlorococcus marinus (strain MIT 9515), this protein is ATP synthase epsilon chain.